We begin with the raw amino-acid sequence, 216 residues long: Dephospho-CoA kinase (216 aa).

In terms of domain architecture, DPCK spans 18 to 216 (IIGVIGPPCS…SELASVLQSK (199 aa)). An ATP-binding site is contributed by 26–31 (CSGKST).

This sequence belongs to the CoaE family.

It is found in the cytoplasm. It carries out the reaction 3'-dephospho-CoA + ATP = ADP + CoA + H(+). Its pathway is cofactor biosynthesis; coenzyme A biosynthesis; CoA from (R)-pantothenate: step 5/5. Catalyzes the phosphorylation of the 3'-hydroxyl group of dephosphocoenzyme A to form coenzyme A. The polypeptide is Dephospho-CoA kinase (Rhodopirellula baltica (strain DSM 10527 / NCIMB 13988 / SH1)).